The following is a 610-amino-acid chain: ATP-dependent zinc metalloprotease FtsH (610 aa).

Residues 1 to 3 (MAK) lie on the Cytoplasmic side of the membrane. Residues 4–24 (NLMLWLVIAVVLMSIFQNFSA) traverse the membrane as a helical segment. Over 25-97 (NNINNRKIDY…IIGAAPEEQS (73 aa)) the chain is Extracellular. A helical membrane pass occupies residues 98-118 (FFTAIFISWFPMLLLIGVWVF). Over 119–610 (FMRQMQVGGG…SNICTDDDNN (492 aa)) the chain is Cytoplasmic. An ATP-binding site is contributed by 192-199 (GPPGTGKT). Position 414 (histidine 414) interacts with Zn(2+). Glutamate 415 is an active-site residue. Residues histidine 418 and aspartate 492 each coordinate Zn(2+).

In the central section; belongs to the AAA ATPase family. The protein in the C-terminal section; belongs to the peptidase M41 family. As to quaternary structure, homohexamer. Zn(2+) serves as cofactor.

It is found in the cell membrane. Acts as a processive, ATP-dependent zinc metallopeptidase for both cytoplasmic and membrane proteins. Plays a role in the quality control of integral membrane proteins. The polypeptide is ATP-dependent zinc metalloprotease FtsH (Buchnera aphidicola subsp. Baizongia pistaciae (strain Bp)).